We begin with the raw amino-acid sequence, 545 residues long: Chaperonin GroEL (545 aa).

Residues 30–33, K51, 87–91, G415, and D495 each bind ATP; these read TLGP and DGTTT.

It belongs to the chaperonin (HSP60) family. Forms a cylinder of 14 subunits composed of two heptameric rings stacked back-to-back. Interacts with the co-chaperonin GroES.

Its subcellular location is the cytoplasm. It carries out the reaction ATP + H2O + a folded polypeptide = ADP + phosphate + an unfolded polypeptide.. Together with its co-chaperonin GroES, plays an essential role in assisting protein folding. The GroEL-GroES system forms a nano-cage that allows encapsulation of the non-native substrate proteins and provides a physical environment optimized to promote and accelerate protein folding. The chain is Chaperonin GroEL from Shewanella sp. (strain MR-7).